A 141-amino-acid polypeptide reads, in one-letter code: Large ribosomal subunit protein uL11 (141 aa).

This sequence belongs to the universal ribosomal protein uL11 family. In terms of assembly, part of the ribosomal stalk of the 50S ribosomal subunit. Interacts with L10 and the large rRNA to form the base of the stalk. L10 forms an elongated spine to which L12 dimers bind in a sequential fashion forming a multimeric L10(L12)X complex. In terms of processing, one or more lysine residues are methylated.

Its function is as follows. Forms part of the ribosomal stalk which helps the ribosome interact with GTP-bound translation factors. This Chlorobium chlorochromatii (strain CaD3) protein is Large ribosomal subunit protein uL11.